The following is a 313-amino-acid chain: Tyrosine recombinase XerD (313 aa).

The region spanning 17-102 is the Core-binding (CB) domain; the sequence is EDNDVIIEQF…TLRRFFQYLY (86 aa). A Tyr recombinase domain is found at 123 to 307; the sequence is RLPKDLSEQQ…ATERLKVLHQ (185 aa). Residues arginine 163, lysine 187, histidine 259, arginine 262, and histidine 285 contribute to the active site. Residue tyrosine 294 is the O-(3'-phospho-DNA)-tyrosine intermediate of the active site.

This sequence belongs to the 'phage' integrase family. XerD subfamily. As to quaternary structure, forms a cyclic heterotetrameric complex composed of two molecules of XerC and two molecules of XerD, in which XerC interacts with XerD via its C-terminal region, XerD interacts with XerC via its C-terminal region and so on.

It is found in the cytoplasm. With respect to regulation, ftsK may regulate the catalytic switch between XerC and XerD in the heterotetrameric complex during the two steps of the recombination process. Site-specific tyrosine recombinase, which acts by catalyzing the cutting and rejoining of the recombining DNA molecules. Binds cooperatively to specific DNA consensus sequences that are separated from XerC binding sites by a short central region, forming the heterotetrameric XerC-XerD complex that recombines DNA substrates. The complex is essential to convert dimers of the bacterial chromosome into monomers to permit their segregation at cell division. It also contributes to the segregational stability of plasmids. In the complex XerD specifically exchanges the bottom DNA strands. This chain is Tyrosine recombinase XerD, found in Proteus mirabilis.